A 514-amino-acid chain; its full sequence is 2,3-bisphosphoglycerate-independent phosphoglycerate mutase (514 aa).

Mn(2+) is bound by residues aspartate 14 and serine 64. Catalysis depends on serine 64, which acts as the Phosphoserine intermediate. Substrate contacts are provided by residues histidine 125, 155 to 156 (RD), arginine 187, arginine 193, 263 to 266 (RADR), and lysine 336. Mn(2+) is bound by residues aspartate 403, histidine 407, aspartate 444, histidine 445, and histidine 463.

It belongs to the BPG-independent phosphoglycerate mutase family. In terms of assembly, monomer. Mn(2+) serves as cofactor.

It catalyses the reaction (2R)-2-phosphoglycerate = (2R)-3-phosphoglycerate. It participates in carbohydrate degradation; glycolysis; pyruvate from D-glyceraldehyde 3-phosphate: step 3/5. Catalyzes the interconversion of 2-phosphoglycerate and 3-phosphoglycerate. This chain is 2,3-bisphosphoglycerate-independent phosphoglycerate mutase, found in Shewanella sp. (strain MR-7).